Reading from the N-terminus, the 158-residue chain is Transcription antitermination protein NusB (158 aa).

Residues Met-1–Lys-13 show a composition bias toward polar residues. The tract at residues Met-1–Arg-24 is disordered.

This sequence belongs to the NusB family.

Involved in transcription antitermination. Required for transcription of ribosomal RNA (rRNA) genes. Binds specifically to the boxA antiterminator sequence of the ribosomal RNA (rrn) operons. This Marinobacter nauticus (strain ATCC 700491 / DSM 11845 / VT8) (Marinobacter aquaeolei) protein is Transcription antitermination protein NusB.